The sequence spans 244 residues: DNA repair protein RecO (244 aa).

Belongs to the RecO family.

Involved in DNA repair and RecF pathway recombination. The sequence is that of DNA repair protein RecO from Jannaschia sp. (strain CCS1).